The following is a 740-amino-acid chain: Catalase-peroxidase 2 (740 aa).

The first 27 residues, 1–27 (MFKKTKPRISILALTISCAIYSGAALA), serve as a signal peptide directing secretion. The segment at residues 106-228 (WHSAGTYRIY…LAAVQMGLIY (123 aa)) is a cross-link (tryptophyl-tyrosyl-methioninium (Trp-Tyr) (with M-254)). His-107 (proton acceptor) is an active-site residue. A cross-link (tryptophyl-tyrosyl-methioninium (Tyr-Met) (with W-106)) is located at residues 228-254 (YVNPEGPNGVPDPLLAAKDIRDTFGRM). Residue His-269 coordinates heme b.

It belongs to the peroxidase family. Peroxidase/catalase subfamily. In terms of assembly, homodimer or homotetramer. Heme b serves as cofactor. Formation of the three residue Trp-Tyr-Met cross-link is important for the catalase, but not the peroxidase activity of the enzyme.

The catalysed reaction is H2O2 + AH2 = A + 2 H2O. It carries out the reaction 2 H2O2 = O2 + 2 H2O. In terms of biological role, bifunctional enzyme with both catalase and broad-spectrum peroxidase activity. This Cellvibrio japonicus (strain Ueda107) (Pseudomonas fluorescens subsp. cellulosa) protein is Catalase-peroxidase 2.